A 119-amino-acid chain; its full sequence is Hydrogenase maturation factor HypA (119 aa).

Residue H2 participates in Ni(2+) binding. Residues C73, C76, C89, and C92 each contribute to the Zn(2+) site.

Belongs to the HypA/HybF family.

Its function is as follows. Involved in the maturation of [NiFe] hydrogenases. Required for nickel insertion into the metal center of the hydrogenase. This chain is Hydrogenase maturation factor HypA, found in Dehalococcoides mccartyi (strain ATCC BAA-2100 / JCM 16839 / KCTC 5957 / BAV1).